Here is an 834-residue protein sequence, read N- to C-terminus: MSQTIDLTLDGLSCGHCVKRVKESLEQRPDVEQADVSITEAHVTGTASAEQLIETIKQAGYDASVSHPKAKPLAESSIPSEALTAVSEALPAATADDDDSQQLLLSGMSCASCVTRVQNALQSVPGVTQARVNLAERTALVMGSASPQDLVQAVEKAGYGAEAIEDDAKRRERQQETAVATMKRFRWQAIVALAVGIPVMVWGMIGDNMMVTADNRSLWLVIGLITLAVMVFAGGHFYRSAWKSLLNGAATMDTLVALGTGVAWLYSMSVNLWPQWFPMEARHLYYEASAMIIGLINLGHMLEARARQRSSKALEKLLDLTPPTARLVTDEGEKSVPLAEVQPGMLLRLTTGDRVPVDGEITQGEAWLDEAMLTGEPIPQQKGEGDSVHAGTVVQDGSVLFRASAVGSHTTLSRIIRMVRQAQSSKPEIGQLADKISAVFVPVVVVIALVSAAIWYFFGPAPQIVYTLVIATTVLIIACPCALGLATPMSIISGVGRAAEFGVLVRDADALQRASTLDTVVFDKTGTLTEGKPQVVAVKTFADVDEAQALRLAAALEQGSSHPLARAILDKAGDMQLPQVNGFRTLRGLGVSGEAEGHALLLGNQALLNEQQVGTKAIEAEITAQASQGATPVLLAVDGKAVALLAVRDPLRSDSVAALQRLHKAGYRLVMLTGDNPTTANAIAKEAGIDEVIAGVLPDGKAEAIKHLQSEGRQVAMVGDGINDAPALAQADVGIAMGGGSDVAIETAAITLMRHSLMGVADALAISRATLHNMKQNLLGAFIYNSIGIPVAAGILWPFTGTLLNPVVAGAAMALSSITVVSNANRLLRFKPKE.

The Cytoplasmic portion of the chain corresponds to 2–186 (SQTIDLTLDG…TAVATMKRFR (185 aa)). HMA domains lie at 3-64 (QTID…YDAS) and 99-162 (DSQQ…YGAE). Cys14, Cys17, Cys110, and Cys113 together coordinate Cu(+). 2 short sequence motifs (CXXC motif) span residues 14–17 (CGHC) and 110–113 (CASC). The helical transmembrane segment at 187–207 (WQAIVALAVGIPVMVWGMIGD) threads the bilayer. Over 208–217 (NMMVTADNRS) the chain is Periplasmic; loop 1. Residues 218–238 (LWLVIGLITLAVMVFAGGHFY) form a helical membrane-spanning segment. Residues 239-253 (RSAWKSLLNGAATMD) lie on the Cytoplasmic side of the membrane. A helical membrane pass occupies residues 254–274 (TLVALGTGVAWLYSMSVNLWP). Over 275 to 283 (QWFPMEARH) the chain is Periplasmic; loop 2. Residues 284–304 (LYYEASAMIIGLINLGHMLEA) traverse the membrane as a helical segment. Topologically, residues 305–437 (RARQRSSKAL…EIGQLADKIS (133 aa)) are cytoplasmic. Residues 438–458 (AVFVPVVVVIALVSAAIWYFF) form a helical membrane-spanning segment. The Periplasmic; loop 3 segment spans residues 459-463 (GPAPQ). The chain crosses the membrane as a helical span at residues 464–484 (IVYTLVIATTVLIIACPCALG). At 485–778 (LATPMSIISG…ATLHNMKQNL (294 aa)) the chain is on the cytoplasmic side. The active-site 4-aspartylphosphate intermediate is the Asp523. Mg(2+)-binding residues include Asp720 and Asp724. The chain crosses the membrane as a helical span at residues 779 to 799 (LGAFIYNSIGIPVAAGILWPF). Position 800 (Thr800) is a topological domain, periplasmic; loop 4. The helical transmembrane segment at 801–821 (GTLLNPVVAGAAMALSSITVV) threads the bilayer. Residues 822–834 (SNANRLLRFKPKE) are Cytoplasmic-facing.

Belongs to the cation transport ATPase (P-type) (TC 3.A.3) family. Type IB subfamily. Copper-exporting P-type ATPase interacts with apo-periplasmic copper chaperone CusF; when CusF is precharged with copper it binds very little CopA. The periplasmic loops of CopA, especially the first half of loop 1, play a large role in binding to CusF.

It localises to the cell inner membrane. It is found in the cytoplasm. It carries out the reaction Cu(+)(in) + ATP + H2O = Cu(+)(out) + ADP + phosphate + H(+). Its activity is regulated as follows. Export is inhibited by vanadate. Phosphorylation is inhibited by vanadate and sensitive to KOH and hydroxylamine; it is not inhibited by azide. Phosphorylation is Cu(+) not Cu(2+)-dependent. ATPase activity is inhibited by bathocuproindisulfonate (BCDS), which chelates Cu(+) but not Cu(2+), and stimulated 3-4-fold by Cu(+). ATPase activity is inhibited by Cu(2+) plus DTT or Ag(+). Functionally, exports Cu(+) from the cytoplasm to the periplasm. Binds 2 Cu(+) ions per monomer, which are transferred to periplasmic copper chaperone CusF upon ATP hydrolysis. In vitro an excess of CusF over CopA is required for efficient transfer. May also be involved in silver export. Its function is as follows. mRNA is subject to programmed ribosomal frameshifting which produces a cytoplasmic copper chaperone CopA(Z) that corresponds to the first HMA domain. The soluble form is essential for cell survivial in the presence of CuSO(4); in growth competition experiments between wild-type and a version that prevents expression of CopA(Z) after 50 generations the non-CopA(Z) version is nearly extinct. The first HMA domain (residues 1-70) can be replaced by B.subtilis Cu chaperone CopZ. The chain is Copper-exporting P-type ATPase from Escherichia coli (strain K12).